We begin with the raw amino-acid sequence, 485 residues long: Glycogen synthase (485 aa).

Lys21 provides a ligand contact to ADP-alpha-D-glucose.

The protein belongs to the glycosyltransferase 1 family. Bacterial/plant glycogen synthase subfamily.

It catalyses the reaction [(1-&gt;4)-alpha-D-glucosyl](n) + ADP-alpha-D-glucose = [(1-&gt;4)-alpha-D-glucosyl](n+1) + ADP + H(+). The protein operates within glycan biosynthesis; glycogen biosynthesis. In terms of biological role, synthesizes alpha-1,4-glucan chains using ADP-glucose. The chain is Glycogen synthase from Pseudomonas savastanoi pv. phaseolicola (strain 1448A / Race 6) (Pseudomonas syringae pv. phaseolicola (strain 1448A / Race 6)).